Reading from the N-terminus, the 65-residue chain is Small ribosomal subunit protein bS21B (65 aa).

It belongs to the bacterial ribosomal protein bS21 family.

This Geobacter sulfurreducens (strain ATCC 51573 / DSM 12127 / PCA) protein is Small ribosomal subunit protein bS21B.